We begin with the raw amino-acid sequence, 208 residues long: N-(5'-phosphoribosyl)anthranilate isomerase (208 aa).

It belongs to the TrpF family.

It catalyses the reaction N-(5-phospho-beta-D-ribosyl)anthranilate = 1-(2-carboxyphenylamino)-1-deoxy-D-ribulose 5-phosphate. Its pathway is amino-acid biosynthesis; L-tryptophan biosynthesis; L-tryptophan from chorismate: step 3/5. The polypeptide is N-(5'-phosphoribosyl)anthranilate isomerase (Methanococcus vannielii (strain ATCC 35089 / DSM 1224 / JCM 13029 / OCM 148 / SB)).